Here is a 423-residue protein sequence, read N- to C-terminus: MNTTLRALSVALAAALIAPSAFAATAAIPTIDFHGYMRAGVGVSGDGSEAEWQKNKLGRLGNESDTYGELELGSEVYKKDDVSFYLDSMVSMVSDGSNDNETTLNDDAQFGLRQLNLQIKGLIPGDPNAVIWGGKRYYQRHDLHIIDTKYWNISGSGAGVENYTLGPGAVSLAWIRGDANDVDYRVDGDSNVNINYIDLRYAGWKPWAGSWTEFGIDYAMPNTTKKQDSYGGLYDADNGVMLTGEISQDMLGGYNKTVLQYANKGLAQNMVSQGGGWYDMWNYVNDATGYRVINTGLIPITEKFSINHVLTWGSADDITDYTDKTRMLSLVARGQYQFTDYVRLIGEVGGFYQKDSYNNGTSYKQAGEKYTIALGLADGPDFMSRPELRIFASYLNDSEDGKPFEDQTANNTWNFGVQVEAWW.

A signal peptide spans 1–23 (MNTTLRALSVALAAALIAPSAFA).

The protein belongs to the porin LamB (TC 1.B.3) family. Homotrimer formed of three 18-stranded antiparallel beta-barrels, containing three independent channels.

Its subcellular location is the cell outer membrane. It carries out the reaction beta-maltose(in) = beta-maltose(out). Involved in the transport of maltose and maltodextrins. This is Maltoporin 1 from Klebsiella pneumoniae subsp. pneumoniae (strain ATCC 700721 / MGH 78578).